A 314-amino-acid polypeptide reads, in one-letter code: 4-hydroxy-3-methylbut-2-enyl diphosphate reductase (314 aa).

Cys-12 contributes to the [4Fe-4S] cluster binding site. His-41 and His-74 together coordinate (2E)-4-hydroxy-3-methylbut-2-enyl diphosphate. His-41 and His-74 together coordinate dimethylallyl diphosphate. His-41 and His-74 together coordinate isopentenyl diphosphate. Cys-96 provides a ligand contact to [4Fe-4S] cluster. His-124 is a (2E)-4-hydroxy-3-methylbut-2-enyl diphosphate binding site. His-124 contacts dimethylallyl diphosphate. Residue His-124 coordinates isopentenyl diphosphate. The active-site Proton donor is the Glu-126. Residue Thr-167 coordinates (2E)-4-hydroxy-3-methylbut-2-enyl diphosphate. Position 197 (Cys-197) interacts with [4Fe-4S] cluster. Residues Ser-225, Ser-226, Asn-227, and Ser-269 each contribute to the (2E)-4-hydroxy-3-methylbut-2-enyl diphosphate site. Dimethylallyl diphosphate-binding residues include Ser-225, Ser-226, Asn-227, and Ser-269. Isopentenyl diphosphate is bound by residues Ser-225, Ser-226, Asn-227, and Ser-269.

This sequence belongs to the IspH family. Requires [4Fe-4S] cluster as cofactor.

The catalysed reaction is isopentenyl diphosphate + 2 oxidized [2Fe-2S]-[ferredoxin] + H2O = (2E)-4-hydroxy-3-methylbut-2-enyl diphosphate + 2 reduced [2Fe-2S]-[ferredoxin] + 2 H(+). It catalyses the reaction dimethylallyl diphosphate + 2 oxidized [2Fe-2S]-[ferredoxin] + H2O = (2E)-4-hydroxy-3-methylbut-2-enyl diphosphate + 2 reduced [2Fe-2S]-[ferredoxin] + 2 H(+). It participates in isoprenoid biosynthesis; dimethylallyl diphosphate biosynthesis; dimethylallyl diphosphate from (2E)-4-hydroxy-3-methylbutenyl diphosphate: step 1/1. Its pathway is isoprenoid biosynthesis; isopentenyl diphosphate biosynthesis via DXP pathway; isopentenyl diphosphate from 1-deoxy-D-xylulose 5-phosphate: step 6/6. Functionally, catalyzes the conversion of 1-hydroxy-2-methyl-2-(E)-butenyl 4-diphosphate (HMBPP) into a mixture of isopentenyl diphosphate (IPP) and dimethylallyl diphosphate (DMAPP). Acts in the terminal step of the DOXP/MEP pathway for isoprenoid precursor biosynthesis. The polypeptide is 4-hydroxy-3-methylbut-2-enyl diphosphate reductase (Actinobacillus pleuropneumoniae serotype 5b (strain L20)).